The following is a 179-amino-acid chain: Signal peptidase complex catalytic subunit SEC11A (179 aa).

Residues 1 to 16 (MLSLDFLDDVRRMNKR) are Cytoplasmic-facing. The chain crosses the membrane as a helical; Signal-anchor for type II membrane protein span at residues 17-36 (QLYYQVLNFGMIVSSALMIW). The Lumenal portion of the chain corresponds to 37–179 (KGLMVITGSE…LGLFVLVHRE (143 aa)). Residues serine 56, histidine 96, and aspartate 122 each act as charge relay system in the active site. Residues 165–176 (AVLFLLGLFVLV) are C-terminal short (CTS) helix.

This sequence belongs to the peptidase S26B family. As to quaternary structure, component of the signal peptidase complex paralog A (SPC-A) composed of a catalytic subunit SEC11A and three accessory subunits SPCS1, SPCS2 and SPCS3. Within the complex, interacts with SPCS2 and SPCS3. The complex induces a local thinning of the ER membrane which is used to measure the length of the signal peptide (SP) h-region of protein substrates. This ensures the selectivity of the complex towards h-regions shorter than 18-20 amino acids.

It localises to the endoplasmic reticulum membrane. The enzyme catalyses Cleavage of hydrophobic, N-terminal signal or leader sequences from secreted and periplasmic proteins.. Its function is as follows. Catalytic component of the signal peptidase complex (SPC) which catalyzes the cleavage of N-terminal signal sequences from nascent proteins as they are translocated into the lumen of the endoplasmic reticulum. Specifically cleaves N-terminal signal peptides that contain a hydrophobic alpha-helix (h-region) shorter than 18-20 amino acids. This Bos taurus (Bovine) protein is Signal peptidase complex catalytic subunit SEC11A (SEC11A).